Reading from the N-terminus, the 105-residue chain is Translation initiation factor 1A 2 (105 aa).

Residues 1–22 (MRKRREGSAAPSTQEVTRVRTP) form a disordered region. An S1-like domain is found at 17-91 (TRVRTPRKEN…TKADVIWKYT (75 aa)).

The protein belongs to the eIF-1A family.

Functionally, seems to be required for maximal rate of protein biosynthesis. Enhances ribosome dissociation into subunits and stabilizes the binding of the initiator Met-tRNA(I) to 40 S ribosomal subunits. The polypeptide is Translation initiation factor 1A 2 (eIF1A2) (Methanosarcina acetivorans (strain ATCC 35395 / DSM 2834 / JCM 12185 / C2A)).